Here is a 499-residue protein sequence, read N- to C-terminus: Glutamate--tRNA ligase (499 aa).

Residues 10 to 20 (PSPTGTPHVGM) carry the 'HIGH' region motif. The 'KMSKS' region signature appears at 255–259 (KLSKR). Lys258 serves as a coordination point for ATP.

The protein belongs to the class-I aminoacyl-tRNA synthetase family. Glutamate--tRNA ligase type 1 subfamily. Monomer.

It localises to the cytoplasm. The catalysed reaction is tRNA(Glu) + L-glutamate + ATP = L-glutamyl-tRNA(Glu) + AMP + diphosphate. Catalyzes the attachment of glutamate to tRNA(Glu) in a two-step reaction: glutamate is first activated by ATP to form Glu-AMP and then transferred to the acceptor end of tRNA(Glu). This chain is Glutamate--tRNA ligase, found in Corynebacterium urealyticum (strain ATCC 43042 / DSM 7109).